The primary structure comprises 101 residues: Small ribosomal subunit protein eS24 (101 aa).

Belongs to the eukaryotic ribosomal protein eS24 family.

In Methanocaldococcus jannaschii (strain ATCC 43067 / DSM 2661 / JAL-1 / JCM 10045 / NBRC 100440) (Methanococcus jannaschii), this protein is Small ribosomal subunit protein eS24.